A 339-amino-acid chain; its full sequence is Type IV secretion system protein PtlH homolog (339 aa).

The protein belongs to the GSP E family.

In Bordetella bronchiseptica (strain ATCC BAA-588 / NCTC 13252 / RB50) (Alcaligenes bronchisepticus), this protein is Type IV secretion system protein PtlH homolog (ptlH).